A 57-amino-acid polypeptide reads, in one-letter code: uncharacterized protein (57 aa).

This is an uncharacterized protein from Halorubrum sp. PV6 (HRPV-1).